The following is a 405-amino-acid chain: Protein NDRG4 (405 aa).

The segment at 352–405 (AGAVPSASMTRLARSRTASLTSASSVDGARPRPCTQSESSDGIGQINHTMEVSC) is disordered. Over residues 361-376 (TRLARSRTASLTSASS) the composition is skewed to low complexity. Residues 385-405 (CTQSESSDGIGQINHTMEVSC) are compositionally biased toward polar residues.

Belongs to the NDRG family.

It is found in the cytoplasm. Its subcellular location is the cytosol. In terms of biological role, contributes to the maintenance of intracerebral BDNF levels within the normal range. May enhance growth factor-induced ERK1 and ERK2 phosphorylation. May attenuate growth factor-promoted ELK1 phosphorylation in a microtubule-dependent manner. The chain is Protein NDRG4 from Xenopus tropicalis (Western clawed frog).